We begin with the raw amino-acid sequence, 461 residues long: Hydroxyproline dehydrogenase (461 aa).

N6-acetyllysine is present on Lys-310.

The protein belongs to the proline oxidase family. FAD is required as a cofactor.

The catalysed reaction is trans-4-hydroxy-L-proline + a quinone = (3R,5S)-1-pyrroline-3-hydroxy-5-carboxylate + a quinol + H(+). It carries out the reaction L-proline + a quinone = (S)-1-pyrroline-5-carboxylate + a quinol + H(+). Its pathway is amino-acid degradation; L-proline degradation into L-glutamate; L-glutamate from L-proline: step 1/2. Its function is as follows. Dehydrogenase that converts trans-4-L-hydroxyproline to delta-1-pyrroline-3-hydroxy-5-carboxylate (Hyp) using ubiquinone-10 as the terminal electron acceptor. Can also use proline as a substrate but with a very much lower efficiency. Does not react with other diastereomers of Hyp: trans-4-D-hydroxyproline and cis-4-L-hydroxyproline. Ubiquininone analogs such as menadione, duroquinone and ubiquinone-1 react more efficiently than oxygen as the terminal electron acceptor during catalysis. This is Hydroxyproline dehydrogenase from Bos taurus (Bovine).